Reading from the N-terminus, the 67-residue chain is Mu-conotoxin TsIIIA (67 aa).

An N-terminal signal peptide occupies residues 1 to 20; that stretch reads MMSKLGVLLTICLLLFPLTA. A propeptide spanning residues 21–48 is cleaved from the precursor; that stretch reads VPLDGDQPADQPAERKQNEQHPLFDQKR. 3 disulfide bridges follow: cysteine 50-cysteine 59, cysteine 51-cysteine 64, and cysteine 55-cysteine 65.

It belongs to the conotoxin M superfamily. In terms of tissue distribution, expressed by the venom duct.

It is found in the secreted. Mu-conotoxins block voltage-gated sodium channels (Nav). This toxin specifically inhibits mammalian Nav1.8/SCN10A sodium currents (IC(50)=2.11 uM) without inducing a shift in the current-voltage relationship of this channel. In vivo, shows potent analgesic activity in a mice hotplate analgesic assay. In addition, this toxin has better analgesic effects than Ziconotide, an analgesic drug. The chain is Mu-conotoxin TsIIIA from Conus tessulatus (Tessellate cone).